A 1008-amino-acid chain; its full sequence is Kinesin-like protein KIN-5C (1008 aa).

The region spanning asparagine 12–isoleucine 359 is the Kinesin motor domain. Glycine 98–threonine 105 lines the ATP pocket. Residues lysine 402–lysine 459 are a coiled coil. Disordered regions lie at residues valine 910–isoleucine 931, tyrosine 943–serine 962, and glutamate 975–asparagine 1008. The segment covering histidine 913 to serine 925 has biased composition (basic and acidic residues). Residues aspartate 979–proline 995 are compositionally biased toward basic and acidic residues.

This sequence belongs to the TRAFAC class myosin-kinesin ATPase superfamily. Kinesin family. KIN-5/BimC subfamily.

It is found in the cytoplasm. Its subcellular location is the cytoskeleton. The protein resides in the spindle. Its function is as follows. Responsible for microtubule translocation. May be important for the organization of phragmoplast-specific arrays of microtubules. Plays an essential role in stabilizing the mitotic spindle. Required during mitotic cytokinesis. The polypeptide is Kinesin-like protein KIN-5C (Oryza sativa subsp. japonica (Rice)).